Reading from the N-terminus, the 135-residue chain is Lactoylglutathione lyase (135 aa).

One can recognise a VOC domain in the interval 2 to 126 (RLLHTMLRVG…DGYKIELIEE (125 aa)). H5 is a binding site for Ni(2+). R9 is a substrate binding site. E56 is a binding site for Ni(2+). Residues N60 and H74 each contribute to the substrate site. Ni(2+) contacts are provided by H74 and E122. Residue E122 is the Proton donor/acceptor of the active site.

This sequence belongs to the glyoxalase I family. As to quaternary structure, homodimer. Ni(2+) is required as a cofactor.

It catalyses the reaction (R)-S-lactoylglutathione = methylglyoxal + glutathione. It functions in the pathway secondary metabolite metabolism; methylglyoxal degradation; (R)-lactate from methylglyoxal: step 1/2. Functionally, catalyzes the conversion of hemimercaptal, formed from methylglyoxal and glutathione, to S-lactoylglutathione. This Escherichia coli O157:H7 protein is Lactoylglutathione lyase (gloA).